The sequence spans 147 residues: UPF0178 protein VIBHAR_03247 (147 aa).

This sequence belongs to the UPF0178 family.

The chain is UPF0178 protein VIBHAR_03247 from Vibrio campbellii (strain ATCC BAA-1116).